Consider the following 171-residue polypeptide: Large ribosomal subunit protein uL10 (171 aa).

This sequence belongs to the universal ribosomal protein uL10 family. Part of the ribosomal stalk of the 50S ribosomal subunit. The N-terminus interacts with L11 and the large rRNA to form the base of the stalk. The C-terminus forms an elongated spine to which L12 dimers bind in a sequential fashion forming a multimeric L10(L12)X complex.

Its function is as follows. Forms part of the ribosomal stalk, playing a central role in the interaction of the ribosome with GTP-bound translation factors. This chain is Large ribosomal subunit protein uL10, found in Corynebacterium diphtheriae (strain ATCC 700971 / NCTC 13129 / Biotype gravis).